The primary structure comprises 143 residues: Small ribosomal subunit protein uS11c (143 aa).

It belongs to the universal ribosomal protein uS11 family. As to quaternary structure, part of the 30S ribosomal subunit.

The protein resides in the plastid. It localises to the chloroplast. This is Small ribosomal subunit protein uS11c from Oryza nivara (Indian wild rice).